The sequence spans 417 residues: NADH-quinone oxidoreductase subunit D (417 aa).

It belongs to the complex I 49 kDa subunit family. NDH-1 is composed of 14 different subunits. Subunits NuoB, C, D, E, F, and G constitute the peripheral sector of the complex.

The protein localises to the cell inner membrane. It carries out the reaction a quinone + NADH + 5 H(+)(in) = a quinol + NAD(+) + 4 H(+)(out). In terms of biological role, NDH-1 shuttles electrons from NADH, via FMN and iron-sulfur (Fe-S) centers, to quinones in the respiratory chain. The immediate electron acceptor for the enzyme in this species is believed to be ubiquinone. Couples the redox reaction to proton translocation (for every two electrons transferred, four hydrogen ions are translocated across the cytoplasmic membrane), and thus conserves the redox energy in a proton gradient. This is NADH-quinone oxidoreductase subunit D from Coxiella burnetii (strain RSA 331 / Henzerling II).